A 1376-amino-acid chain; its full sequence is MAQTFTGRKRIRKFFGKIKEVAEMPNLIEVQKASYDQFLQIEEPKGGRADDGLQAVFKSVFPISDFSGAAMLEFVRYEFEPPKYDVDECRQRGMTFAAPLKVTLRLIVFDVDPDTGAKSVKDIKEQDVYTGDIPLMTMNGTFIVNGTERVIVSQMHRSPGVFFDHDKGKTHSSGKLLFAARIIPYRGSWLDIEFDAKDIVYARIDRRRKIPVTSLLFALGLDSEEILNTFYEKILYTRAKDGWRMPFDPKRMKGYKAVADLIDADTGEVVVEAGKKLTVRAARQLVEKGLKALKISDDEMVGQYIGEDIVNVHTGEIYAEAGEEITEKVLKTLGDAGFDEIPVLDIDHINTGAYIRNTLSADKNSSREEALFDIYRVMRPGEPPTLDSAQAMFHSLFFDAERYDLSAVGRVKMNMRLDLDAEDTVRILRREDILAVIKTLVELRDGKGEIDDIDHLGNRRVRSVGELMENQYRVGLLRMERAIKERMSSVDIDTVMPQDLINAKPVAAAVREFFGSSQLSQFMDQTNPLSEITHKRRLSALGPGGLTRERAGFEVRDVHPTHYGRICPIETPEGPNIGLINSLATFARVNKYGFIEAPYRRVVDGRVTDEVVYLSAMEEGKYYVAQANVPLDTDGRFQEDLVICRHAGDVLVVSPDRVDFMDVSPKQLVSVAAALIPFLENDDANRALMGSNMQRQAVPLVRSQAPLVGTGMEAVVARDSGAAIAARRAGVIDQVDATRIVIRATGETDPSKSGVDIYRLMKFQRSNQSTCINQRPLVRVGDVVKKGDIIADGPSTELGELALGRNVLVAFMPWNGYNYEDSILLSENIVKEDVFTSIHIEEFEAMARDTKLGPEEITRDIPNVSEEALKNLDEAGIVYIGAEVRAGDILVGKITPKGESPMTPEEKLLRAIFGEKAADVRDTSLRLPPGTTGTIVEVRVFNRHGVDKDERALAIEREEIERLAKDRDDEQAILDRNVYGRLSEMLVGKVAIAGPKAFKKDTEITKDALGEYPRSQWWLFAVADDALMSELEAIRAQYDESKKRLEQRFLDKVEKLQRGDELPPGVMKMVKVFVAVKRKIQPGDKMAGRHGNKGVVSRIVPVEDMPFLEDGTNVDIVLNPLGVPSRMNVGQILETHLGWACAGLGRQVAAAVDAYYGSKDQQVLRNALVKVYGPDDIEVLDEKQITELGENLRKGVPMATPVFDGAHEADIEEHLEKAGLNPSGQSTLFDGRTGEPFDRKVTVGYIYMLKLHHLVDDKIHARSIGPYSLVTQQPLGGKAQFGGQRFGEMEVWALEAYGAAYTLQEMLTVKSDDVAGRTKVYEAIVRGEDTFESGIPESFNVLVKEMRSLGLNVELLNSKTGRQTNPGTRENLPAAE.

Polar residues predominate over residues 1357 to 1368; it reads NSKTGRQTNPGT. The disordered stretch occupies residues 1357-1376; it reads NSKTGRQTNPGTRENLPAAE.

It belongs to the RNA polymerase beta chain family. In terms of assembly, the RNAP catalytic core consists of 2 alpha, 1 beta, 1 beta' and 1 omega subunit. When a sigma factor is associated with the core the holoenzyme is formed, which can initiate transcription.

The catalysed reaction is RNA(n) + a ribonucleoside 5'-triphosphate = RNA(n+1) + diphosphate. Its function is as follows. DNA-dependent RNA polymerase catalyzes the transcription of DNA into RNA using the four ribonucleoside triphosphates as substrates. The chain is DNA-directed RNA polymerase subunit beta from Azorhizobium caulinodans (strain ATCC 43989 / DSM 5975 / JCM 20966 / LMG 6465 / NBRC 14845 / NCIMB 13405 / ORS 571).